A 77-amino-acid polypeptide reads, in one-letter code: MAGRKGGRAKRRKVCFFTANGITHIDYKDVDLLKRFVSERGKILPRRVTGTSAKYQRKLTVAIKRARQMALLPYVGE.

Belongs to the bacterial ribosomal protein bS18 family. As to quaternary structure, part of the 30S ribosomal subunit. Forms a tight heterodimer with protein bS6.

Functionally, binds as a heterodimer with protein bS6 to the central domain of the 16S rRNA, where it helps stabilize the platform of the 30S subunit. The protein is Small ribosomal subunit protein bS18 of Bacillus cytotoxicus (strain DSM 22905 / CIP 110041 / 391-98 / NVH 391-98).